Here is a 325-residue protein sequence, read N- to C-terminus: tRNA pseudouridine synthase B (325 aa).

The active-site Nucleophile is the Asp-49.

The protein belongs to the pseudouridine synthase TruB family. Type 1 subfamily.

It catalyses the reaction uridine(55) in tRNA = pseudouridine(55) in tRNA. In terms of biological role, responsible for synthesis of pseudouridine from uracil-55 in the psi GC loop of transfer RNAs. The protein is tRNA pseudouridine synthase B of Mesorhizobium japonicum (strain LMG 29417 / CECT 9101 / MAFF 303099) (Mesorhizobium loti (strain MAFF 303099)).